The sequence spans 1357 residues: DNA-directed RNA polymerase subunit beta (1357 aa).

The protein belongs to the RNA polymerase beta chain family. As to quaternary structure, the RNAP catalytic core consists of 2 alpha, 1 beta, 1 beta' and 1 omega subunit. When a sigma factor is associated with the core the holoenzyme is formed, which can initiate transcription.

It catalyses the reaction RNA(n) + a ribonucleoside 5'-triphosphate = RNA(n+1) + diphosphate. Its function is as follows. DNA-dependent RNA polymerase catalyzes the transcription of DNA into RNA using the four ribonucleoside triphosphates as substrates. This is DNA-directed RNA polymerase subunit beta from Pseudomonas paraeruginosa (strain DSM 24068 / PA7) (Pseudomonas aeruginosa (strain PA7)).